We begin with the raw amino-acid sequence, 1017 residues long: Ubiquitin-like modifier-activating enzyme 1 (1017 aa).

Repeat copies occupy residues 26-163 (SHET…GQLF) and 419-571 (GKTL…QVVV). The segment at 26 to 571 (SHETMKKITS…GTKGNTQVVV (546 aa)) is 2 approximate repeats. ATP is bound by residues Ala-438, Asp-464, Arg-475, Lys-488, and 536–537 (DN). Cys-592 functions as the Glycyl thioester intermediate in the catalytic mechanism. Polar residues predominate over residues 765 to 781 (IQTSENEPAPSSNTQQA). Residues 765 to 788 (IQTSENEPAPSSNTQQAGGDAEDD) are disordered.

Belongs to the ubiquitin-activating E1 family. In terms of assembly, monomer.

It catalyses the reaction ATP + ubiquitin + [E1 ubiquitin-activating enzyme]-L-cysteine = AMP + diphosphate + S-ubiquitinyl-[E1 ubiquitin-activating enzyme]-L-cysteine.. Its pathway is protein modification; protein ubiquitination. Catalyzes the first step in ubiquitin conjugation to mark cellular proteins for degradation through the ubiquitin-proteasome system. Activates ubiquitin by first adenylating its C-terminal glycine residue with ATP, and thereafter linking this residue to the side chain of a cysteine residue in E1, yielding a ubiquitin-E1 thioester and free AMP. The protein is Ubiquitin-like modifier-activating enzyme 1 (uba1) of Dictyostelium discoideum (Social amoeba).